The sequence spans 298 residues: Protease HtpX homolog (298 aa).

2 consecutive transmembrane segments (helical) span residues 15–35 (LIMV…GYLF) and 39–59 (PWMG…IMWQ). Residue histidine 143 coordinates Zn(2+). Glutamate 144 is an active-site residue. Histidine 147 serves as a coordination point for Zn(2+). 2 helical membrane passes run 153 to 173 (ILLS…SGMA) and 197 to 217 (MIFK…SASL). Glutamate 227 lines the Zn(2+) pocket.

It belongs to the peptidase M48B family. Zn(2+) serves as cofactor.

It localises to the cell membrane. The sequence is that of Protease HtpX homolog from Lactobacillus helveticus (strain DPC 4571).